A 371-amino-acid polypeptide reads, in one-letter code: S-adenosylmethionine:tRNA ribosyltransferase-isomerase (371 aa).

The protein belongs to the QueA family. In terms of assembly, monomer.

The protein resides in the cytoplasm. The catalysed reaction is 7-aminomethyl-7-carbaguanosine(34) in tRNA + S-adenosyl-L-methionine = epoxyqueuosine(34) in tRNA + adenine + L-methionine + 2 H(+). Its pathway is tRNA modification; tRNA-queuosine biosynthesis. Functionally, transfers and isomerizes the ribose moiety from AdoMet to the 7-aminomethyl group of 7-deazaguanine (preQ1-tRNA) to give epoxyqueuosine (oQ-tRNA). In Nitratidesulfovibrio vulgaris (strain ATCC 29579 / DSM 644 / CCUG 34227 / NCIMB 8303 / VKM B-1760 / Hildenborough) (Desulfovibrio vulgaris), this protein is S-adenosylmethionine:tRNA ribosyltransferase-isomerase.